The chain runs to 266 residues: Mitochondrial genome maintenance protein MGM101 (266 aa).

Residues 1–23 (MLHSTKLVFRATPQALCFPVRSY) constitute a mitochondrion transit peptide. Polar residues-rich tracts occupy residues 37–47 (KTTSKLAPSIT) and 57–68 (PSLQEPQSATST). The segment at 37 to 68 (KTTSKLAPSITTEDEVAEQDPSLQEPQSATST) is disordered.

It belongs to the MGM101 family. In terms of assembly, forms homooligomers in vitro.

The protein localises to the mitochondrion matrix. Its subcellular location is the mitochondrion nucleoid. Plays a role in the replication of the mitochondrial genome and the maintenance of its telomeres. Able to catalyze strand annealing and D-loop formation. Binds a wide variety of DNA substrates. Exhibited the highest affinity for DNA molecules carrying 3' ssDNA overhangs (Y-form, 3' FLAP, 3' overhang) and for substrates with complex structures (X-O and Fork). Forms homogeneous ring-shaped structures at the ssDNA native telomeres ends. Oligomers seem to bind to the ssDNA as a filament until they reach the double-stranded region and induce the formation of bends and loops within the double-stranded part of the molecules. In Candida parapsilosis (strain CDC 317 / ATCC MYA-4646) (Yeast), this protein is Mitochondrial genome maintenance protein MGM101.